Consider the following 111-residue polypeptide: Large ribosomal subunit protein bL21 (111 aa).

Belongs to the bacterial ribosomal protein bL21 family. As to quaternary structure, part of the 50S ribosomal subunit. Contacts protein L20.

Its function is as follows. This protein binds to 23S rRNA in the presence of protein L20. The polypeptide is Large ribosomal subunit protein bL21 (Thermosynechococcus vestitus (strain NIES-2133 / IAM M-273 / BP-1)).